We begin with the raw amino-acid sequence, 165 residues long: AP-3 complex subunit sigma (165 aa).

It belongs to the adaptor complexes small subunit family. In terms of assembly, adaptor protein complex 3 (AP-3) is a heterotetramer composed of 2 large adaptins (apl5 and apl6), a medium adaptin (apm3) and a small adaptin (aps3).

Its subcellular location is the golgi apparatus. The protein resides in the cytoplasmic vesicle membrane. Part of the AP-3 complex, an adaptor-related complex which is not clathrin-associated. The complex is associated with the Golgi region as well as more peripheral structures. It facilitates the budding of vesicles from the Golgi membrane and may be directly involved in trafficking to the vacuole. This Schizosaccharomyces pombe (strain 972 / ATCC 24843) (Fission yeast) protein is AP-3 complex subunit sigma (aps3).